Consider the following 108-residue polypeptide: Vitelline membrane protein 15a-1 (108 aa).

Residues 1–18 form the signal peptide; sequence MNKFIILAIFALAVGAMA. Residues 52 to 88 enclose the VM domain; it reads HAPHAKCGANLLVGCAPSVAHVPCVPLPGHAPAHGYG. Residues 87–108 are disordered; the sequence is YGHAPAPHYRAPESDSFDQFEE.

This sequence belongs to the vitelline membrane family. Expressed in the middle and posterior regions of the follicle cells.

The protein localises to the secreted. This is Vitelline membrane protein 15a-1 from Aedes aegypti (Yellowfever mosquito).